An 832-amino-acid polypeptide reads, in one-letter code: Subtilisin-like protease SBT2.4 (832 aa).

The signal sequence occupies residues 1 to 27 (METNPRKLRSYSYICLIVCIFVLVVCA). The 65-residue stretch at 74-138 (EAKKIEEIHD…VEEDKGVKLM (65 aa)) folds into the Inhibitor I9 domain. In terms of domain architecture, Peptidase S8 spans 150–690 (QQVWQKISNE…AGHVNPARAL (541 aa)). Catalysis depends on D174, which acts as the Charge relay system. N196 and N238 each carry an N-linked (GlcNAc...) asparagine glycan. H252 functions as the Charge relay system in the catalytic mechanism. The PA domain maps to 425-524 (TNGSVLQPLT…SAAQIILRYY (100 aa)). N426 carries N-linked (GlcNAc...) asparagine glycosylation. The active-site Charge relay system is the S618. N761, N774, and N800 each carry an N-linked (GlcNAc...) asparagine glycan.

It belongs to the peptidase S8 family.

It is found in the secreted. Its function is as follows. Serine protease required for epidermal surface formation in embryos and juvenile plants. Involved in embryonic cuticle formation downstream of BHLH95/ZOU. The chain is Subtilisin-like protease SBT2.4 from Arabidopsis thaliana (Mouse-ear cress).